Reading from the N-terminus, the 1713-residue chain is Serine/threonine-protein kinase MRCK beta (1713 aa).

Residues 76–342 (FEIIKVIGRG…IEDFKKHAFF (267 aa)) form the Protein kinase domain. ATP is bound by residues 82–90 (IGRGAFGEV) and lysine 105. Residue aspartate 200 is the Proton acceptor of the active site. Phosphoserine; by autocatalysis is present on residues serine 221 and serine 233. Threonine 239 is modified (phosphothreonine; by autocatalysis). The AGC-kinase C-terminal domain maps to 343–413 (EGLNWENIRN…TTESCFSDRG (71 aa)). Threonine 423 bears the Phosphothreonine mark. A coiled-coil region spans residues 434-649 (LENSLQIEAY…ASKERKLREH (216 aa)). The disordered stretch occupies residues 461-485 (LQESTQTVQSLHGSTRALGNSNRDK). Over residues 463–481 (ESTQTVQSLHGSTRALGNS) the composition is skewed to polar residues. The residue at position 671 (arginine 671) is an Omega-N-methylarginine. Coiled-coil stretches lie at residues 681–815 (QEIS…AHWE) and 882–939 (ALEA…FRAD). A Phosphoserine modification is found at serine 927. A Phosphotyrosine modification is found at tyrosine 954. 2 stretches are compositionally biased toward polar residues: residues 971 to 994 (ASDQETQASKLDLSPSVSVATSTE) and 1001 to 1014 (RSQQRPSTVPLPNT). Residues 971–1014 (ASDQETQASKLDLSPSVSVATSTEQQEDAARSQQRPSTVPLPNT) form a disordered region. A Phorbol-ester/DAG-type zinc finger spans residues 1026–1076 (AHQFSIKSFPSPTQCSHCTSLMVGLIRQGYACEVCAFSCHVSCKDSAPQVC). The PH domain occupies 1096 to 1215 (GTAYKGYVKV…WVGILEGLQA (120 aa)). The CNH domain occupies 1241 to 1515 (IKTVLAAAIV…RPLNSDGSLN (275 aa)). The CRIB domain maps to 1585 to 1598 (ISNPTNFNHVAHMG). The disordered stretch occupies residues 1615 to 1713 (PTAQEEKQGP…EGLDQPACDA (99 aa)). Positions 1666–1677 (DFDKEPDSDSTK) are enriched in basic and acidic residues. A phosphoserine mark is found at serine 1682, serine 1684, serine 1688, serine 1692, and serine 1695.

Belongs to the protein kinase superfamily. AGC Ser/Thr protein kinase family. DMPK subfamily. As to quaternary structure, homodimer and homotetramer via the coiled coil regions. Interacts tightly with GTP-bound but not GDP-bound CDC42. Interacts with TJP1; this interaction requires the presence of catalytically active CDC42. Forms a tripartite complex with MYO18A and LURAP1 with the latter acting as an adapter connecting CDC42BPB and MYO18A. LURAP1 binding results in activation of CDC42BPB by abolition of its negative autoregulation. Interacts with STRIP1, STRN3 and SIKE1. Interacts with CPNE4 (via VWFA domain). Interacts with LURAP1. Interacts (via AGC-kinase C-terminal domain) with FAM89B/LRAP25 (via LRR repeat). Forms a tripartite complex with FAM89B/LRAP25 and LIMK1. Mg(2+) serves as cofactor. In terms of processing, proteolytically cleaved by caspases upon apoptosis induction. As to expression, expressed in all tissues examined with highest levels in lung and kidney.

The protein resides in the cytoplasm. Its subcellular location is the cell membrane. The protein localises to the cell junction. It localises to the cell projection. It is found in the lamellipodium. The catalysed reaction is L-seryl-[protein] + ATP = O-phospho-L-seryl-[protein] + ADP + H(+). It catalyses the reaction L-threonyl-[protein] + ATP = O-phospho-L-threonyl-[protein] + ADP + H(+). Its activity is regulated as follows. Maintained in an inactive, closed conformation by an interaction between the kinase domain and the negative autoregulatory C-terminal coiled-coil region. Agonist binding to the phorbol ester binding site disrupts this, releasing the kinase domain to allow N-terminus-mediated dimerization and kinase activation by transautophosphorylation. Inhibited by chelerythrine chloride. Functionally, serine/threonine-protein kinase which is an important downstream effector of CDC42 and plays a role in the regulation of cytoskeleton reorganization and cell migration. Regulates actin cytoskeletal reorganization via phosphorylation of PPP1R12C and MYL9/MLC2. In concert with MYO18A and LURAP1, is involved in modulating lamellar actomyosin retrograde flow that is crucial to cell protrusion and migration. Phosphorylates PPP1R12A. In concert with FAM89B/LRAP25 mediates the targeting of LIMK1 to the lamellipodium resulting in its activation and subsequent phosphorylation of CFL1 which is important for lamellipodial F-actin regulation. The protein is Serine/threonine-protein kinase MRCK beta of Rattus norvegicus (Rat).